Here is a 198-residue protein sequence, read N- to C-terminus: Na(+)-translocating NADH-quinone reductase subunit E (198 aa).

Transmembrane regions (helical) follow at residues 11–31 (SIFIENMALSFFLGMCTFLAV), 39–59 (FGLGVAVVVVLTLAVPLNNLV), 77–97 (FLNFITFIGVIAALVQILEMV), 110–130 (GIFLPLITVNCAIFGGVSFMV), 140–160 (IVYGFGSGVGWMLAIVALAGI), and 176–196 (LGITFITVGLMALGFMSFSGV).

The protein belongs to the NqrDE/RnfAE family. As to quaternary structure, composed of six subunits; NqrA, NqrB, NqrC, NqrD, NqrE and NqrF.

The protein resides in the cell inner membrane. It carries out the reaction a ubiquinone + n Na(+)(in) + NADH + H(+) = a ubiquinol + n Na(+)(out) + NAD(+). Functionally, NQR complex catalyzes the reduction of ubiquinone-1 to ubiquinol by two successive reactions, coupled with the transport of Na(+) ions from the cytoplasm to the periplasm. NqrA to NqrE are probably involved in the second step, the conversion of ubisemiquinone to ubiquinol. The sequence is that of Na(+)-translocating NADH-quinone reductase subunit E from Aliivibrio salmonicida (strain LFI1238) (Vibrio salmonicida (strain LFI1238)).